Reading from the N-terminus, the 71-residue chain is Large ribosomal subunit protein bL31 (71 aa).

Cys16, Cys18, Cys37, and Cys40 together coordinate Zn(2+).

The protein belongs to the bacterial ribosomal protein bL31 family. Type A subfamily. Part of the 50S ribosomal subunit. Zn(2+) serves as cofactor.

Binds the 23S rRNA. The protein is Large ribosomal subunit protein bL31 of Nitratidesulfovibrio vulgaris (strain DSM 19637 / Miyazaki F) (Desulfovibrio vulgaris).